The sequence spans 106 residues: Cuticle protein CP14.6 (106 aa).

Residues 1–16 form the signal peptide; it reads MKSFFVVALLVAAAAA. The 70-residue stretch at 37 to 106 folds into the Chitin-binding type R&amp;R domain; the sequence is PQHYSYSVET…PQGAHLPVAA (70 aa).

In terms of biological role, component of the cuticle of tobacco hornworm. The polypeptide is Cuticle protein CP14.6 (CP14.6) (Manduca sexta (Tobacco hawkmoth)).